Consider the following 156-residue polypeptide: Arginine repressor (156 aa).

Belongs to the ArgR family.

The protein localises to the cytoplasm. It functions in the pathway amino-acid biosynthesis; L-arginine biosynthesis [regulation]. In terms of biological role, regulates arginine biosynthesis genes. The chain is Arginine repressor from Salmonella paratyphi C (strain RKS4594).